Here is a 108-residue protein sequence, read N- to C-terminus: UPF0145 protein sll118 (108 aa).

This sequence belongs to the UPF0145 family.

In Synechocystis sp. (strain ATCC 27184 / PCC 6803 / Kazusa), this protein is UPF0145 protein sll118.